We begin with the raw amino-acid sequence, 571 residues long: E3 ubiquitin-protein ligase RNF168 (571 aa).

The RING-type zinc finger occupies 16 to 55 (CGICMEILVEPVTLPCNHTLCKPCFQSTVEKASLCCPFCR). Position 70 is a phosphoserine (S70). The LR motif 1 signature appears at 110–128 (LSKPGELRREYEEEISKVA). A Phosphoserine modification is found at S134. The short motif at 143–151 (EEYIQRLLA) is the UMI motif element. 2 disordered regions span residues 151–174 (AEEE…QLKS) and 191–292 (EGSI…GADS). An MIU motif 1 motif is present at residues 168–191 (MEEQLKSDEELARKLSIDINNFCE). At S197 the chain carries Phosphoserine. The span at 202–214 (RKSDPVTPKSEKK) shows a compositional bias: basic and acidic residues. Residue K210 forms a Glycyl lysine isopeptide (Lys-Gly) (interchain with G-Cter in SUMO2) linkage. A compositionally biased stretch (polar residues) spans 231-242 (PKSQFGSASHSE). The segment covering 243–263 (AVQEVRKDSVSKDIDSSDRKS) has biased composition (basic and acidic residues). T362 carries the post-translational modification Phosphothreonine. Disordered regions lie at residues 390 to 422 (NQES…EETE) and 459 to 560 (KEQM…ISQK). S411, S414, and S415 each carry phosphoserine. An MIU motif 2 motif is present at residues 439 to 462 (RHKQEEQDRLLALQLQKEVDKEQM). The LR motif 2 motif lies at 466-477 (RQKGSPDEYHLR). S470 carries the post-translational modification Phosphoserine. Residues 508-519 (PTPERGSRDKNR) show a composition bias toward basic and acidic residues. Polar residues-rich tracts occupy residues 520-530 (QVSLKMQLKQS) and 549-560 (SAHSLQPSISQK). K528 participates in a covalent cross-link: Glycyl lysine isopeptide (Lys-Gly) (interchain with G-Cter in SUMO2).

This sequence belongs to the RNF168 family. As to quaternary structure, monomer. Interacts with UBE2N/UBC13. Sumoylated with SUMO1 by PIAS4 in response to double-strand breaks (DSBs). Post-translationally, ubiquitinated.

The protein localises to the nucleus. The enzyme catalyses S-ubiquitinyl-[E2 ubiquitin-conjugating enzyme]-L-cysteine + [acceptor protein]-L-lysine = [E2 ubiquitin-conjugating enzyme]-L-cysteine + N(6)-ubiquitinyl-[acceptor protein]-L-lysine.. It participates in protein modification; protein ubiquitination. E3 ubiquitin-protein ligase required for accumulation of repair proteins to sites of DNA damage. Acts with UBE2N/UBC13 to amplify the RNF8-dependent histone ubiquitination. Recruited to sites of DNA damage at double-strand breaks (DSBs) by binding to ubiquitinated histone H2A and H2AX and amplifies the RNF8-dependent H2A ubiquitination, promoting the formation of 'Lys-63'-linked ubiquitin conjugates. This leads to concentrate ubiquitinated histones H2A and H2AX at DNA lesions to the threshold required for recruitment of TP53BP1 and BRCA1. Also recruited at DNA interstrand cross-links (ICLs) sites and promotes accumulation of 'Lys-63'-linked ubiquitination of histones H2A and H2AX, leading to recruitment of FAAP20/C1orf86 and Fanconi anemia (FA) complex, followed by interstrand cross-link repair. H2A ubiquitination also mediates the ATM-dependent transcriptional silencing at regions flanking DSBs in cis, a mechanism to avoid collision between transcription and repair intermediates. Also involved in class switch recombination in immune system, via its role in regulation of DSBs repair. Following DNA damage, promotes the ubiquitination and degradation of JMJD2A/KDM4A in collaboration with RNF8, leading to unmask H4K20me2 mark and promote the recruitment of TP53BP1 at DNA damage sites. Not able to initiate 'Lys-63'-linked ubiquitination in vitro; possibly due to partial occlusion of the UBE2N/UBC13-binding region. Catalyzes monoubiquitination of 'Lys-13' and 'Lys-15' of nucleosomal histone H2A (H2AK13Ub and H2AK15Ub, respectively). In Homo sapiens (Human), this protein is E3 ubiquitin-protein ligase RNF168.